The primary structure comprises 246 residues: Pyridoxine 5'-phosphate synthase (246 aa).

Residue N12 participates in 3-amino-2-oxopropyl phosphate binding. 14 to 15 (DH) contacts 1-deoxy-D-xylulose 5-phosphate. 3-amino-2-oxopropyl phosphate is bound at residue R23. H48 acts as the Proton acceptor in catalysis. 1-deoxy-D-xylulose 5-phosphate contacts are provided by R50 and H55. Residue E75 is the Proton acceptor of the active site. T105 contributes to the 1-deoxy-D-xylulose 5-phosphate binding site. H196 serves as the catalytic Proton donor. 3-amino-2-oxopropyl phosphate-binding positions include G197 and 218–219 (GH).

This sequence belongs to the PNP synthase family. In terms of assembly, homooctamer; tetramer of dimers.

It is found in the cytoplasm. The enzyme catalyses 3-amino-2-oxopropyl phosphate + 1-deoxy-D-xylulose 5-phosphate = pyridoxine 5'-phosphate + phosphate + 2 H2O + H(+). Its pathway is cofactor biosynthesis; pyridoxine 5'-phosphate biosynthesis; pyridoxine 5'-phosphate from D-erythrose 4-phosphate: step 5/5. In terms of biological role, catalyzes the complicated ring closure reaction between the two acyclic compounds 1-deoxy-D-xylulose-5-phosphate (DXP) and 3-amino-2-oxopropyl phosphate (1-amino-acetone-3-phosphate or AAP) to form pyridoxine 5'-phosphate (PNP) and inorganic phosphate. This is Pyridoxine 5'-phosphate synthase from Nitrosococcus oceani (strain ATCC 19707 / BCRC 17464 / JCM 30415 / NCIMB 11848 / C-107).